A 305-amino-acid polypeptide reads, in one-letter code: MSISASLVKELRDLTGAGMMDCKAALAATEGKIEAAVDWLRAKGIAKADKKAGRTAAEGLVGVAASGNKAVVVEVNSETDFVARNDAFQELVRKIAQAALSTDGSSEAVANANVDGKTVTEAAKDAVATIGENISFRRSAALSVPQGVVATYIHNGVADGLGKLGVLVAIETAGDAEAAQAFGRQVAMHVAAVNPLALTSADVNPEAAEREKAIFIDQARQSGKPDNIIEKMVEGRMRKFYEEVVLLSQAFVINPDLTVEAALKDAEKAIGAPAKITGFARIALGEGIEKEESDFAAEVAAAAKG.

Residues 79–82 are involved in Mg(2+) ion dislocation from EF-Tu; the sequence is TDFV.

It belongs to the EF-Ts family.

Its subcellular location is the cytoplasm. Functionally, associates with the EF-Tu.GDP complex and induces the exchange of GDP to GTP. It remains bound to the aminoacyl-tRNA.EF-Tu.GTP complex up to the GTP hydrolysis stage on the ribosome. The protein is Elongation factor Ts of Brucella suis biovar 1 (strain 1330).